A 79-amino-acid polypeptide reads, in one-letter code: Large ribosomal subunit protein uL24 (79 aa).

The protein belongs to the universal ribosomal protein uL24 family. Part of the 50S ribosomal subunit.

Functionally, one of two assembly initiator proteins, it binds directly to the 5'-end of the 23S rRNA, where it nucleates assembly of the 50S subunit. In terms of biological role, one of the proteins that surrounds the polypeptide exit tunnel on the outside of the subunit. This chain is Large ribosomal subunit protein uL24, found in Aliarcobacter butzleri (strain RM4018) (Arcobacter butzleri).